A 429-amino-acid chain; its full sequence is Phosphomethylpyrimidine synthase (429 aa).

Substrate contacts are provided by residues N66, M94, Y123, H162, S184–G186, D225–R228, and E264. H268 lines the Zn(2+) pocket. Y291 is a substrate binding site. H332 contacts Zn(2+). [4Fe-4S] cluster contacts are provided by C408, C411, and C415.

Belongs to the ThiC family. Requires [4Fe-4S] cluster as cofactor.

The catalysed reaction is 5-amino-1-(5-phospho-beta-D-ribosyl)imidazole + S-adenosyl-L-methionine = 4-amino-2-methyl-5-(phosphooxymethyl)pyrimidine + CO + 5'-deoxyadenosine + formate + L-methionine + 3 H(+). It functions in the pathway cofactor biosynthesis; thiamine diphosphate biosynthesis. In terms of biological role, catalyzes the synthesis of the hydroxymethylpyrimidine phosphate (HMP-P) moiety of thiamine from aminoimidazole ribotide (AIR) in a radical S-adenosyl-L-methionine (SAM)-dependent reaction. This is Phosphomethylpyrimidine synthase from Sulfurisphaera tokodaii (strain DSM 16993 / JCM 10545 / NBRC 100140 / 7) (Sulfolobus tokodaii).